We begin with the raw amino-acid sequence, 491 residues long: Probable polygalacturonase (491 aa).

Residues 15 to 35 (PIVSFYCFQVVSVLVAVVLLL) traverse the membrane as a helical segment. Residues asparagine 165, asparagine 175, and asparagine 214 are each glycosylated (N-linked (GlcNAc...) asparagine). PbH1 repeat units lie at residues 230–256 (SRNI…NPDS), 257–278 (CTNT…AVKS), 319–340 (IQDV…RIKT), and 348–369 (VKDI…WMTG). Aspartate 271 (proton donor) is an active-site residue. N-linked (GlcNAc...) asparagine glycosylation is found at asparagine 399 and asparagine 421.

It belongs to the glycosyl hydrolase 28 family.

The protein resides in the membrane. The catalysed reaction is (1,4-alpha-D-galacturonosyl)n+m + H2O = (1,4-alpha-D-galacturonosyl)n + (1,4-alpha-D-galacturonosyl)m.. The polypeptide is Probable polygalacturonase (Vitis vinifera (Grape)).